We begin with the raw amino-acid sequence, 377 residues long: Palmitoyltransferase PFA3 (377 aa).

The Cytoplasmic portion of the chain corresponds to 1–31 (MATNNNNNNGNPILRSLETSCCFLATLFPKV). Residues 32–52 (FCTLVLTWSLYVLLFIIPNYI) traverse the membrane as a helical segment. The Lumenal portion of the chain corresponds to 53-62 (KSSLNSTILN). The chain crosses the membrane as a helical span at residues 63 to 83 (IIGITLYVLCIISYYKIILIG). The Cytoplasmic portion of the chain corresponds to 84–181 (PGSPLDYPEL…STCIGFHNYK (98 aa)). The DHHC domain occupies 138-188 (RYCTKCSVWKPDRSHHCSSSGKCILKMDHYCPWFSTCIGFHNYKFFIQFLS). Catalysis depends on C168, which acts as the S-palmitoyl cysteine intermediate. The helical transmembrane segment at 182-202 (FFIQFLSYVAIYCWFLFIISG) threads the bilayer. At 203 to 222 (KILYNFITEGLFEDEILSLN) the chain is on the lumenal side. Residues 223–243 (LVAVLILSFAFAIAVSVFAMF) form a helical membrane-spanning segment. The Cytoplasmic segment spans residues 244-377 (SIYLCCKNLT…LRRERQANIV (134 aa)).

It belongs to the DHHC palmitoyltransferase family. PFA3 subfamily. In terms of processing, autopalmitoylated.

Its subcellular location is the vacuole membrane. The enzyme catalyses L-cysteinyl-[protein] + hexadecanoyl-CoA = S-hexadecanoyl-L-cysteinyl-[protein] + CoA. Functionally, palmitoyltransferase specific for VAC8. Palmitoylates VAC8 at one or more of its N-terminal cysteine residues, which is required for its proper membrane localization. The polypeptide is Palmitoyltransferase PFA3 (PFA3) (Candida albicans (strain SC5314 / ATCC MYA-2876) (Yeast)).